Here is a 681-residue protein sequence, read N- to C-terminus: MFRKKKKKRPEISAPQNFQHRVHTSFDPKEGKFVGLPPQWQNILDTLRRPKPVVDPSRITRVQLQPMKTVVRGSAMPVDGYISGLLNDIQKLSVISSNTLRGRSPTSRRRAQSLGLLGDEHWATDPDMYLQSPQSERTDPHGLYLSCNGGTPAGHKQMPWPEPQSPRVLPNGLAAKAQSLGPAEFQGASQRCLQLGACLQSSPPGASPPTGTNRHGMKAAKHGSEEARPQSCLVGSATGRPGGEGSPSPKTRESSLKRRLFRSMFLSTAATAPPSSSKPGPPPQSKPNSSFRPPQKDNPPSLVAKAQSLPSDQPVGTFSPLTTSDTSSPQKSLRTAPATGQLPGRSSPAGSPRTWHAQISTSNLYLPQDPTVAKGALAGEDTGVVTHEQFKAALRMVVDQGDPRLLLDSYVKIGEGSTGIVCLAREKHSGRQVAVKMMDLRKQQRRELLFNEVVIMRDYQHFNVVEMYKSYLVGEELWVLMEFLQGGALTDIVSQVRLNEEQIATVCEAVLQALAYLHAQGVIHRDIKSDSILLTLDGRVKLSDFGFCAQISKDVPKRKSLVGTPYWMAPEVISRSLYATEVDIWSLGIMVIEMVDGEPPYFSDSPVQAMKRLRDSPPPKLKNSHKVSPVLRDFLERMLVRDPQERATAQELLDHPFLLQTGLPECLVPLIQLYRKQTSTC.

4 disordered regions span residues 1 to 30, 149 to 169, 200 to 256, and 268 to 355; these read MFRK…DPKE, GGTP…PRVL, QSSP…ESSL, and TAAT…PRTW. The CRIB domain occupies 12 to 25; sequence ISAPQNFQHRVHTS. Positions 26 to 406 are linker; it reads FDPKEGKFVG…VVDQGDPRLL (381 aa). Composition is skewed to low complexity over residues 201-212 and 268-278; these read SSPPGASPPTGT and TAATAPPSSSK. Residues 308–333 are compositionally biased toward polar residues; that stretch reads SLPSDQPVGTFSPLTTSDTSSPQKSL. Residues 407–658 enclose the Protein kinase domain; that stretch reads LDSYVKIGEG…AQELLDHPFL (252 aa). ATP is bound by residues 413–421 and Lys-436; that span reads IGEGSTGIV. Asp-526 (proton acceptor) is an active-site residue. Phosphoserine; by autocatalysis is present on Ser-560.

The protein belongs to the protein kinase superfamily. STE Ser/Thr protein kinase family. STE20 subfamily. As to quaternary structure, interacts tightly with GTP-bound but not GDP-bound CDC42/p21 and RAC1. Interacts with the androgen receptor AR and the estrogen receptor ESR1. Interacts with IQGAP1 and PPM1B. Post-translationally, autophosphorylated. Phosphorylated by MAP2K6//MAPKK6, leading to PAK6 activation. Selectively expressed in brain and testis, with lower levels in multiple tissues including prostate and breast.

It localises to the cytoplasm. Its subcellular location is the nucleus. It catalyses the reaction L-seryl-[protein] + ATP = O-phospho-L-seryl-[protein] + ADP + H(+). The catalysed reaction is L-threonyl-[protein] + ATP = O-phospho-L-threonyl-[protein] + ADP + H(+). Serine/threonine protein kinase that plays a role in the regulation of gene transcription. The kinase activity is induced by various effectors including AR or MAP2K6/MAPKK6. Phosphorylates the DNA-binding domain of androgen receptor/AR and thereby inhibits AR-mediated transcription. Also inhibits ESR1-mediated transcription. May play a role in cytoskeleton regulation by interacting with IQGAP1. May protect cells from apoptosis through phosphorylation of BAD. The sequence is that of Serine/threonine-protein kinase PAK 6 (PAK6) from Homo sapiens (Human).